A 627-amino-acid polypeptide reads, in one-letter code: Druantia protein DruC (627 aa).

It is found in the cytoplasm. Functionally, component of antiviral defense system Druantia type I, composed of DruA, DruB, DruC, DruD and DruE. Expression of Druantia in E.coli (strain MG1655) confers resistance to phage lambda, SECphi18, SECphi27 and T4. This chain is Druantia protein DruC, found in Escherichia coli (strain UMEA 4076-1).